A 249-amino-acid chain; its full sequence is MRQLIAGNWKMNGLRSTSESLLQALRDAAPHALRNCDMLICPPATLIAQAASVLAGSGIEVGAQDCHMARSGAHTGDLSAEMLVEAGAHWVILGHSERRRDHGELSETVREKVIAARQFGLTPIVCVGETEDERASGRETEIVGWQIKGSLPDGFAADSNGVIAYEPVWAIGTGRTATVEDVAMMHAFIREELVRQFGEAGRGVRILYGGSVKPENAASLLRVPEVGGALVGGASLSAQDFLAIAEASA.

Residue 8 to 10 (NWK) participates in substrate binding. Histidine 95 serves as the catalytic Electrophile. Glutamate 166 functions as the Proton acceptor in the catalytic mechanism. Substrate is bound by residues glycine 172, serine 211, and 232–233 (GG).

It belongs to the triosephosphate isomerase family. Homodimer.

It is found in the cytoplasm. The enzyme catalyses D-glyceraldehyde 3-phosphate = dihydroxyacetone phosphate. Its pathway is carbohydrate biosynthesis; gluconeogenesis. It functions in the pathway carbohydrate degradation; glycolysis; D-glyceraldehyde 3-phosphate from glycerone phosphate: step 1/1. Its function is as follows. Involved in the gluconeogenesis. Catalyzes stereospecifically the conversion of dihydroxyacetone phosphate (DHAP) to D-glyceraldehyde-3-phosphate (G3P). The polypeptide is Triosephosphate isomerase (Granulibacter bethesdensis (strain ATCC BAA-1260 / CGDNIH1)).